A 64-amino-acid polypeptide reads, in one-letter code: Phi-buthitoxin-Hj1a (64 aa).

Residues 1–18 (MNSFVVVLLLFIAILCNA) form the signal peptide. 3 cysteine pairs are disulfide-bonded: C29-C43, C36-C49, and C42-C58.

The protein belongs to the scorpion calcin-like family. As to expression, expressed by the venom gland.

Its subcellular location is the secreted. In terms of biological role, may increase intracellular calcium release through the activation of nuclear inositol 1,4,5-trisphosphate receptors (ITPR) of cardiomyocytes, thereby causing an increase in the contraction frequency of these cells. This is Phi-buthitoxin-Hj1a from Hottentotta judaicus (Black scorpion).